The sequence spans 411 residues: Serpin A3-3 (411 aa).

A signal peptide spans 1-24; sequence MRAERLSPLLALGLLVAGIRSVHC. 5 N-linked (GlcNAc...) asparagine glycosylation sites follow: Asn-100, Asn-180, Asn-230, Asn-264, and Asn-318.

The protein belongs to the serpin family. As to quaternary structure, homodimer.

It is found in the cytoplasmic vesicle. The protein localises to the secretory vesicle. Its subcellular location is the chromaffin granule. The protein resides in the secreted. Its function is as follows. Serine protease inhibitor. Strongly inhibits elastase and trypsin stoichiometrically at the molar ratio of 1:1. Acts as a moderate inhibitor of plasmin and chymotrypsin. Does not inhibit thrombin, urokinase, kallikrein, tissue plasminogen activator, cathepsin G or the cysteine proteases papain, cathepsin B or cathepsin L. This chain is Serpin A3-3 (SERPINA3-3), found in Bos taurus (Bovine).